Here is a 221-residue protein sequence, read N- to C-terminus: Iron-sulfur cluster repair protein YtfE (221 aa).

The protein belongs to the RIC family. YtfE subfamily. Homodimer.

The protein resides in the cytoplasm. In terms of biological role, di-iron-containing protein involved in the repair of iron-sulfur clusters damaged by oxidative and nitrosative stress conditions. This Pectobacterium carotovorum subsp. carotovorum (strain PC1) protein is Iron-sulfur cluster repair protein YtfE.